Reading from the N-terminus, the 392-residue chain is Galactokinase (392 aa).

Positions 37, 43, 44, and 46 each coordinate alpha-D-galactose. ATP is bound by residues Gly136, Gly138, Ser140, and Ser141. Asp186 contacts alpha-D-galactose. Asp186 acts as the Proton acceptor in catalysis. Phosphoserine is present on Ser230. Residue Tyr236 coordinates alpha-D-galactose.

This sequence belongs to the GHMP kinase family. GalK subfamily. As to quaternary structure, homodimer.

It carries out the reaction alpha-D-galactose + ATP = alpha-D-galactose 1-phosphate + ADP + H(+). The protein operates within carbohydrate metabolism; galactose metabolism. Catalyzes the transfer of a phosphate from ATP to alpha-D-galactose and participates in the first committed step in the catabolism of galactose. This is Galactokinase (GALK1) from Canis lupus familiaris (Dog).